A 395-amino-acid polypeptide reads, in one-letter code: Innexin inx3 (395 aa).

The Cytoplasmic segment spans residues 1 to 37 (MAVFGMVSAVSGFIKIRYLLDKAVIDNMVFRCHYRIT). The helical transmembrane segment at 38–58 (TAILFTCCIIVTANNLIGDPI) threads the bilayer. Topologically, residues 59-114 (SCINDGAIPMHVINTFCWITYTYTIPGQQHRQIGTDVAGPGLGNEYGQEKRYHSYY) are extracellular. Residues 115–135 (QWVPFVLFFQGLMFYVPHWVW) traverse the membrane as a helical segment. The Cytoplasmic segment spans residues 136-183 (KNMEDGKIRMITDGLRGMVSVPDDYRRDRQDRILKYFVNSLNTHNGYS). A helical membrane pass occupies residues 184–204 (FAYFFCELLNFINVIVNIFMV). Residues 205–272 (DKFLGGAFMS…VLALNILNEK (68 aa)) are Extracellular-facing. The chain crosses the membrane as a helical span at residues 273–293 (IYIFLWFWFIILATISGVAVL). Residues 294-395 (YSLVVIMMPT…TFGGGKETET (102 aa)) lie on the Cytoplasmic side of the membrane. A phosphoserine mark is found at Ser-366 and Ser-377. Tyr-381 carries the post-translational modification Phosphotyrosine.

It belongs to the pannexin family. In terms of assembly, heterooligomer of Inx2 (via cytoplasmic C-terminal region) and Inx3 (via cytoplasmic C-terminal region). In ovary, expressed in nurse cells and follicle cells. Expressed in embryonic epithelial cells. Ubiquitously expressed in stage 5 embryos. Expressed in foregut and hindgut from stage 11-17 and in proventriculus, epidermis and CNS in stage 16 embryos (at protein level). Expressed in anterior and ventral regions in stage 8 embryos. Repeating epidermal pattern emerges at stage 11, refines to one or two cells at each side of the segment borders by stage 13. Expressed in the imaginal wing disk. In pupae, expressed in the CNS and in secondary and tertiary pigment cells of the retina.

Its subcellular location is the cell membrane. The protein resides in the cell junction. The protein localises to the gap junction. It localises to the cytoplasm. It is found in the lateral cell membrane. Its subcellular location is the apicolateral cell membrane. In terms of biological role, structural components of the gap junctions. Essential for proper epithelial development of the epidermis. In Drosophila melanogaster (Fruit fly), this protein is Innexin inx3 (Inx3).